The sequence spans 515 residues: Probable cytosol aminopeptidase (515 aa).

Mn(2+) is bound by residues lysine 279 and aspartate 284. Lysine 291 is a catalytic residue. The Mn(2+) site is built by aspartate 302, aspartate 361, and glutamate 363. Arginine 365 is a catalytic residue.

This sequence belongs to the peptidase M17 family. Requires Mn(2+) as cofactor.

It localises to the cytoplasm. The enzyme catalyses Release of an N-terminal amino acid, Xaa-|-Yaa-, in which Xaa is preferably Leu, but may be other amino acids including Pro although not Arg or Lys, and Yaa may be Pro. Amino acid amides and methyl esters are also readily hydrolyzed, but rates on arylamides are exceedingly low.. The catalysed reaction is Release of an N-terminal amino acid, preferentially leucine, but not glutamic or aspartic acids.. Its function is as follows. Presumably involved in the processing and regular turnover of intracellular proteins. Catalyzes the removal of unsubstituted N-terminal amino acids from various peptides. The protein is Probable cytosol aminopeptidase of Mycobacterium tuberculosis (strain ATCC 25177 / H37Ra).